A 145-amino-acid polypeptide reads, in one-letter code: uncharacterized protein (145 aa).

The dksA C4-type zinc finger occupies 86–110 (CERCGEEIPEPRLCAIPWTRYCAKC).

This is an uncharacterized protein from Aquifex aeolicus (strain VF5).